We begin with the raw amino-acid sequence, 175 residues long: Peptide deformylase (175 aa).

Fe cation contacts are provided by Cys-99 and His-141. Glu-142 is a catalytic residue. His-145 provides a ligand contact to Fe cation.

The protein belongs to the polypeptide deformylase family. It depends on Fe(2+) as a cofactor.

The catalysed reaction is N-terminal N-formyl-L-methionyl-[peptide] + H2O = N-terminal L-methionyl-[peptide] + formate. Functionally, removes the formyl group from the N-terminal Met of newly synthesized proteins. Requires at least a dipeptide for an efficient rate of reaction. N-terminal L-methionine is a prerequisite for activity but the enzyme has broad specificity at other positions. This is Peptide deformylase from Rickettsia prowazekii (strain Madrid E).